We begin with the raw amino-acid sequence, 150 residues long: Infection structure-specific protein 24 (150 aa).

Its function is as follows. Involved in the development of infection structures. The germ tube elongates across the leaf surface of the infected plant until it recognizes a stomate. Physical stimuli provided by the stomate induce differentiation of the germ tube to form a series of infection structures involved in host colonization. In Uromyces appendiculatus (Rust fungus), this protein is Infection structure-specific protein 24 (INF24).